The primary structure comprises 269 residues: MIRALLLSTLVAGALSCGVPTYPPQLSRVVGGEDARPNSWPWQVSLQYSSSGQWRHTCGGSLIEQNWVLTAAHCISSSRTYRVVVGRQSLSTVESGSLTIAVSKSVIHEKWNSNQLAQGNDIALLKLASSVPLTDKIQLGCLPAAGTILPNNYVCYVTGWGRLQSNGALPDILQQGKLLVVDYATCSNPSWWGSTVKTNMICAGGDGVTSSCNGDSGGPLNCQAANRQWQVHGIVSFGSSLGCNYYRKPSVFTRVSNYNDWISSVIENN.

An N-terminal signal peptide occupies residues 1 to 16; the sequence is MIRALLLSTLVAGALS. Residues 17 to 28 constitute a propeptide, activation peptide; sequence CGVPTYPPQLSR. A Peptidase S1 domain is found at 29–267; the sequence is VVGGEDARPN…YNDWISSVIE (239 aa). An intrachain disulfide couples Cys58 to Cys74. Catalysis depends on charge relay system residues His73 and Asp121. 3 disulfides stabilise this stretch: Cys155-Cys222, Cys186-Cys202, and Cys212-Cys243. The active-site Charge relay system is Ser216.

The protein belongs to the peptidase S1 family. Elastase subfamily. As to quaternary structure, interacts with CPA1. Interacts with SERPINA1. As to expression, pancreas.

The protein localises to the secreted. It carries out the reaction Preferential cleavage: Leu-|-Xaa, Met-|-Xaa and Phe-|-Xaa. Hydrolyzes elastin.. Elastase that enhances insulin signaling and might have a physiologic role in cellular glucose metabolism. Circulates in plasma and reduces platelet hyperactivation, triggers both insulin secretion and degradation, and increases insulin sensitivity. This chain is Chymotrypsin-like elastase family member 2A (CELA2A), found in Bos taurus (Bovine).